Reading from the N-terminus, the 311-residue chain is Dihydroorotate dehydrogenase A (fumarate) (311 aa).

FMN is bound by residues Ser19 and 43 to 44 (KS). Substrate contacts are provided by residues Lys43, 67–71 (NSMGL), and Asn127. Asn127 lines the FMN pocket. Cys130 serves as the catalytic Nucleophile. Positions 164 and 192 each coordinate FMN. Position 193–194 (193–194 (NS)) interacts with substrate. FMN contacts are provided by residues Gly221, 249-250 (GG), and 271-272 (GT).

This sequence belongs to the dihydroorotate dehydrogenase family. Type 1 subfamily. Homodimer. FMN serves as cofactor.

The protein localises to the cytoplasm. The catalysed reaction is (S)-dihydroorotate + fumarate = orotate + succinate. The protein operates within pyrimidine metabolism; UMP biosynthesis via de novo pathway. Its function is as follows. Catalyzes the conversion of dihydroorotate to orotate with fumarate as the electron acceptor. The polypeptide is Dihydroorotate dehydrogenase A (fumarate) (pyrDA) (Lactococcus lactis subsp. cremoris (Streptococcus cremoris)).